Reading from the N-terminus, the 401-residue chain is Argininosuccinate synthase (401 aa).

8-16 (AYSGGLDTS) contributes to the ATP binding site. Tyr85 provides a ligand contact to L-citrulline. Position 115 (Gly115) interacts with ATP. Residues Thr117, Asn121, and Asp122 each contribute to the L-aspartate site. Position 121 (Asn121) interacts with L-citrulline. Arg125, Ser173, Glu258, and Tyr270 together coordinate L-citrulline.

It belongs to the argininosuccinate synthase family. Type 1 subfamily. In terms of assembly, homotetramer.

It is found in the cytoplasm. The enzyme catalyses L-citrulline + L-aspartate + ATP = 2-(N(omega)-L-arginino)succinate + AMP + diphosphate + H(+). It functions in the pathway amino-acid biosynthesis; L-arginine biosynthesis; L-arginine from L-ornithine and carbamoyl phosphate: step 2/3. The chain is Argininosuccinate synthase from Staphylococcus aureus (strain MRSA252).